Reading from the N-terminus, the 727-residue chain is Glycerol-3-phosphate dehydrogenase, mitochondrial (727 aa).

The transit peptide at 1 to 42 directs the protein to the mitochondrion; sequence MAFQKAVKGTILVGGGALATVLGLSHFAHYKRKQVNLAFVEA. An FAD-binding site is contributed by 71 to 99; that stretch reads DVLVIGGGATGSGCALDAVTRGLKTALVE. Tyrosine 601 is modified (phosphotyrosine). EF-hand domains lie at 623-658 and 659-694; these read SDID…IGVQ and MDEN…IQKG. 5 residues coordinate Ca(2+): aspartate 672, asparagine 674, asparagine 676, glutamine 678, and glutamate 683.

The protein belongs to the FAD-dependent glycerol-3-phosphate dehydrogenase family. The cofactor is FAD.

It localises to the mitochondrion. The enzyme catalyses a quinone + sn-glycerol 3-phosphate = dihydroxyacetone phosphate + a quinol. It participates in polyol metabolism; glycerol degradation via glycerol kinase pathway; glycerone phosphate from sn-glycerol 3-phosphate (aerobic route): step 1/1. Its activity is regulated as follows. Calcium-binding enhance the activity of the enzyme. Calcium-responsive mitochondrial glycerol-3-phosphate dehydrogenase which seems to be a key component of the pancreatic beta-cell glucose-sensing device. The protein is Glycerol-3-phosphate dehydrogenase, mitochondrial (GPD2) of Bos taurus (Bovine).